The following is a 493-amino-acid chain: Cobyric acid synthase (493 aa).

Positions 246-440 (PIDIAVIKMP…IHGVFDGVVF (195 aa)) constitute a GATase cobBQ-type domain. The active-site Nucleophile is cysteine 326. Histidine 432 is a catalytic residue.

It belongs to the CobB/CobQ family. CobQ subfamily.

The protein operates within cofactor biosynthesis; adenosylcobalamin biosynthesis. In terms of biological role, catalyzes amidations at positions B, D, E, and G on adenosylcobyrinic A,C-diamide. NH(2) groups are provided by glutamine, and one molecule of ATP is hydrogenolyzed for each amidation. In Clostridium botulinum (strain ATCC 19397 / Type A), this protein is Cobyric acid synthase.